Reading from the N-terminus, the 106-residue chain is Nucleoid-associated protein Nwi_0368 (106 aa).

This sequence belongs to the YbaB/EbfC family. As to quaternary structure, homodimer.

It localises to the cytoplasm. The protein resides in the nucleoid. Binds to DNA and alters its conformation. May be involved in regulation of gene expression, nucleoid organization and DNA protection. This Nitrobacter winogradskyi (strain ATCC 25391 / DSM 10237 / CIP 104748 / NCIMB 11846 / Nb-255) protein is Nucleoid-associated protein Nwi_0368.